We begin with the raw amino-acid sequence, 156 residues long: ATP synthase subunit b (156 aa).

A helical membrane pass occupies residues 11 to 31; the sequence is AIAFILFVWFCMKYVWPPLMA.

It belongs to the ATPase B chain family. In terms of assembly, F-type ATPases have 2 components, F(1) - the catalytic core - and F(0) - the membrane proton channel. F(1) has five subunits: alpha(3), beta(3), gamma(1), delta(1), epsilon(1). F(0) has three main subunits: a(1), b(2) and c(10-14). The alpha and beta chains form an alternating ring which encloses part of the gamma chain. F(1) is attached to F(0) by a central stalk formed by the gamma and epsilon chains, while a peripheral stalk is formed by the delta and b chains.

The protein resides in the cell inner membrane. F(1)F(0) ATP synthase produces ATP from ADP in the presence of a proton or sodium gradient. F-type ATPases consist of two structural domains, F(1) containing the extramembraneous catalytic core and F(0) containing the membrane proton channel, linked together by a central stalk and a peripheral stalk. During catalysis, ATP synthesis in the catalytic domain of F(1) is coupled via a rotary mechanism of the central stalk subunits to proton translocation. Functionally, component of the F(0) channel, it forms part of the peripheral stalk, linking F(1) to F(0). This is ATP synthase subunit b from Enterobacter sp. (strain 638).